The chain runs to 109 residues: uncharacterized protein (109 aa).

It is found in the mitochondrion. This is an uncharacterized protein from Saccharomyces cerevisiae (strain ATCC 204508 / S288c) (Baker's yeast).